The following is a 566-amino-acid chain: MDLHRAAFKMENSSYLPNPLASPALMVLASTAEASRDASIPCQQPRPFGVPVSVDKDVHIPFTNGSYTFASMYHRQGGVPGTFANRDFPPSLLHLHPQFAPPNLDCTPISMLNHSGVGAFRPFASTEDRESYQSAFTPAKRLKNCHDTESPHLRFSDADGKEYDFGTQLPSSSPGSLKVDDTGKKIFAVSGLISDREASSSPEDRNDRCKKKAAALFDSQAPICPICQVLLRPSELQEHMEQELEQLAQLPSSKNSLLKDAMAPGTPKSLLLSASIKREGESPTASPHSSATDDLHHSDRYQTFLRVRANRQTRLNARIGKMKRRKQDEGQREGSCMAEDDAVDIEHENNNRFEEYGWCGQKRIRATTLLEGGFRGSGFIMCSGKENPDSDADLDVDGDDTLEYGKPQYTEADVIPCTGEEPGEAKEREALRGAVLNGGPPSTRITPEFSKWANDEMPSTSNGESSKQEAMQKTCKNSDIEKITEDSAVTTFEALKARVRELERQLSRGDRYKCLICMDSYSMPLTSIQCWHVHCEECWLRTLGAKKLCPQCNTITAPGDLRRIYL.

Lysine 277 is covalently cross-linked (Glycyl lysine isopeptide (Lys-Gly) (interchain with G-Cter in SUMO2)). Residues 277-297 (KREGESPTASPHSSATDDLHH) are disordered. Serine 390 is subject to Phosphoserine. A coiled-coil region spans residues 485 to 513 (EDSAVTTFEALKARVRELERQLSRGDRYK). A required for targeting to the cytoplasm region spans residues 514–522 (CLICMDSYS). Residues 514–553 (CLICMDSYSMPLTSIQCWHVHCEECWLRTLGAKKLCPQCN) form an RING-type zinc finger.

In terms of assembly, interacts with SIN3B. Interacts with CTNNB1 (via Armadillo repeats 2-8). Interacts with USP7 (via MATH domain). Post-translationally, auto-ubiquitinated; leads to proteasomal degradation.

The protein resides in the cytoplasm. It localises to the nucleus. It carries out the reaction S-ubiquitinyl-[E2 ubiquitin-conjugating enzyme]-L-cysteine + [acceptor protein]-L-lysine = [E2 ubiquitin-conjugating enzyme]-L-cysteine + N(6)-ubiquitinyl-[acceptor protein]-L-lysine.. The protein operates within protein modification; protein ubiquitination. In terms of biological role, E3 ubiquitin-protein ligase that promotes the ubiquitination and proteasomal degradation of SIN3B. Independently of its E3 ligase activity, acts as a CTNNB1 stabilizer through USP7-mediated deubiquitination of CTNNB1 and promotes Wnt signaling. Plays a critical role in the regulation of nuclear lamina. The polypeptide is E3 ubiquitin-protein ligase RNF220 (RNF220) (Macaca fascicularis (Crab-eating macaque)).